A 259-amino-acid polypeptide reads, in one-letter code: Glucose-1-phosphate thymidylyltransferase (259 aa).

It belongs to the inositol monophosphatase superfamily.

The enzyme catalyses dTTP + alpha-D-glucose 1-phosphate + H(+) = dTDP-alpha-D-glucose + diphosphate. It functions in the pathway antibiotic biosynthesis; streptomycin biosynthesis. This Streptomyces griseus protein is Glucose-1-phosphate thymidylyltransferase (strO).